We begin with the raw amino-acid sequence, 209 residues long: Thymidylate kinase (209 aa).

ATP is bound at residue 10 to 17; that stretch reads GIDGCGKT.

It belongs to the thymidylate kinase family.

It catalyses the reaction dTMP + ATP = dTDP + ADP. Functionally, phosphorylation of dTMP to form dTDP in both de novo and salvage pathways of dTTP synthesis. The protein is Thymidylate kinase of Synechococcus sp. (strain CC9605).